The sequence spans 480 residues: Adenosylhomocysteinase (480 aa).

Positions 63, 142, and 203 each coordinate substrate. NAD(+) is bound at residue 204–206 (TTT). Substrate is bound by residues Lys-233 and Asp-237. NAD(+) contacts are provided by residues Asn-238, 267-272 (GYGDVG), Glu-290, Asn-325, 346-348 (IGH), and Asn-394.

It belongs to the adenosylhomocysteinase family. NAD(+) is required as a cofactor.

It localises to the cytoplasm. It catalyses the reaction S-adenosyl-L-homocysteine + H2O = L-homocysteine + adenosine. It participates in amino-acid biosynthesis; L-homocysteine biosynthesis; L-homocysteine from S-adenosyl-L-homocysteine: step 1/1. Functionally, may play a key role in the regulation of the intracellular concentration of adenosylhomocysteine. In Xylella fastidiosa (strain Temecula1 / ATCC 700964), this protein is Adenosylhomocysteinase.